A 181-amino-acid chain; its full sequence is uncharacterized protein (181 aa).

2 stretches are compositionally biased toward gly residues: residues arginine 143 to glycine 156 and glycine 170 to phenylalanine 181. Residues arginine 143–phenylalanine 181 are disordered.

Has been detected in a cytochrome bc1-aa3 supercomplex; its deletion however leaves complex activity unaffected.

This is an uncharacterized protein from Corynebacterium glutamicum (strain ATCC 13032 / DSM 20300 / JCM 1318 / BCRC 11384 / CCUG 27702 / LMG 3730 / NBRC 12168 / NCIMB 10025 / NRRL B-2784 / 534).